Here is an 87-residue protein sequence, read N- to C-terminus: Putative defensin-like protein 317 (87 aa).

The N-terminal stretch at 1–24 (MKSFLVAFLIVLVFFCVEMKIGNG) is a signal peptide. 3 cysteine pairs are disulfide-bonded: cysteine 38–cysteine 71, cysteine 47–cysteine 80, and cysteine 56–cysteine 82.

It belongs to the DEFL family.

Its subcellular location is the secreted. This chain is Putative defensin-like protein 317, found in Arabidopsis thaliana (Mouse-ear cress).